The following is a 126-amino-acid chain: MLIGVGTDIVQILRIEKILHLYPELFAKRILASKELRQFALLNKTSHATFLAKRFAAKEAVSKAFGIGIGQGINFKDITILNDDLGKPIVEVSASYTKKYSSFNIHLSLSDDYPVCVAFAIVESSC.

2 residues coordinate Mg(2+): D8 and E59.

The protein belongs to the P-Pant transferase superfamily. AcpS family. Requires Mg(2+) as cofactor.

The protein resides in the cytoplasm. It catalyses the reaction apo-[ACP] + CoA = holo-[ACP] + adenosine 3',5'-bisphosphate + H(+). In terms of biological role, transfers the 4'-phosphopantetheine moiety from coenzyme A to a Ser of acyl-carrier-protein. The sequence is that of Holo-[acyl-carrier-protein] synthase from Rickettsia akari (strain Hartford).